Consider the following 310-residue polypeptide: ER-derived vesicles protein ERV29 (310 aa).

Residues 1–108 are Cytoplasmic-facing; that stretch reads MSYRGPIGNF…YLNKWKHYPY (108 aa). The interval 11–31 is disordered; that stretch reads GGMPMSSSQGPYSGGAQFRSN. Residues 109-129 traverse the membrane as a helical segment; it reads FFVVVFLVVVTVSMLIGASLL. The Lumenal portion of the chain corresponds to 130 to 137; sequence VLRKQTNY. Residues 138–158 form a helical membrane-spanning segment; it reads ATGVLCACVISQALVYGLFTG. Over 159–209 the chain is Cytoplasmic; it reads SSFVLRNFSVIGGLLIAFSDSIVQNKTTFGMLPELNSKNDKAKGYLLFAGR. Residues 210-230 form a helical membrane-spanning segment; it reads ILIVLMFIAFTFSKSWFTVVL. The Lumenal segment spans residues 231–245; that stretch reads TIIGTICFAIGYKTK. The chain crosses the membrane as a helical span at residues 246–266; the sequence is FASIMLGLILTFYNITLNNYW. Residues 267 to 310 are Cytoplasmic-facing; that stretch reads FYNNTKRDFLKYEFYQNLSIIGGLLLVTNTGAGELSVDEKKKIY. The Di-lysine motif motif lies at 307-310; sequence KKIY.

The protein belongs to the SURF4 family.

Its subcellular location is the endoplasmic reticulum membrane. Its function is as follows. Constituent of COPII-coated endoplasmic reticulum-derived transport vesicles. Required for efficient transport of a subset of secretory proteins to the Golgi. The C-terminal di-lysine motif is required for exit from the endoplasmic reticulum. Required directly for packaging glycosylated pro-alpha-factor into COPII vesicles. Facilitates retrograde transport from the Golgi to the endoplasmic reticulum. In Saccharomyces cerevisiae (strain ATCC 204508 / S288c) (Baker's yeast), this protein is ER-derived vesicles protein ERV29 (ERV29).